A 321-amino-acid chain; its full sequence is Ferredoxin--NADP reductase (321 aa).

E33, Q41, Y46, V86, L119, D277, and S318 together coordinate FAD.

The protein belongs to the ferredoxin--NADP reductase type 2 family. As to quaternary structure, homodimer. Requires FAD as cofactor.

It carries out the reaction 2 reduced [2Fe-2S]-[ferredoxin] + NADP(+) + H(+) = 2 oxidized [2Fe-2S]-[ferredoxin] + NADPH. In Lactococcus lactis subsp. cremoris (strain SK11), this protein is Ferredoxin--NADP reductase.